The sequence spans 861 residues: Actin-binding LIM protein 1 (861 aa).

LIM zinc-binding domains lie at 97–156 (IHCH…MYGT), 156–216 (TRCH…MSSS), 224–283 (SNCA…LFGV), and 283–343 (VKCE…TKTE). Ser216 is modified (phosphoserine). The segment at 374 to 414 (LQLLSPPCLTNSNKNPRQPTRTSSESIYSRPGSSIPGSPGH) is disordered. Over residues 381–400 (CLTNSNKNPRQPTRTSSESI) the composition is skewed to polar residues. Low complexity predominate over residues 404–413 (PGSSIPGSPG). Ser411 carries the post-translational modification Phosphoserine. Phosphotyrosine is present on residues Tyr417 and Tyr440. 2 disordered regions span residues 459 to 590 (EDKQ…PTYA) and 634 to 682 (FPAA…ELLR). Residues Ser466, Ser470, and Ser475 each carry the phosphoserine modification. Residues 467–478 (LGESPRTLSPTP) show a composition bias toward polar residues. Thr477 carries the phosphothreonine modification. Ser479 is subject to Phosphoserine. Phosphotyrosine is present on Tyr483. A compositionally biased stretch (polar residues) spans 493–518 (RSTSQGSINSPVYSRHSYTPTTSRSP). A phosphoserine mark is found at Ser496, Ser499, and Ser502. Low complexity predominate over residues 536-546 (PLRTSSFSSTH). A phosphoserine mark is found at Ser582 and Ser671. Residues 673–723 (REEDEEELLRRRQLQEEQLMKLNSGLGQLILKEEMEKESRERASLASRYDS) adopt a coiled-coil conformation. Lys704 participates in a covalent cross-link: Glycyl lysine isopeptide (Lys-Gly) (interchain with G-Cter in SUMO2). Positions 713–748 (ERASLASRYDSPLHSASHAPSSKTSSLPGYGKNGLH) are disordered. 4 positions are modified to phosphoserine: Ser723, Ser738, Ser760, and Ser789. The span at 724–738 (PLHSASHAPSSKTSS) shows a compositional bias: low complexity. The 69-residue stretch at 793–861 (MLEPKIFPYE…NDMKKKAKLF (69 aa)) folds into the HP domain.

Binds F-actin. Interacts with ABRA. In terms of tissue distribution, isoform 1 is detected in adult retina, where it is highly expressed in the ganglion layer. Detected in rod inner segment. Isoform 2 is highly expressed in adult retina, brain, kidney and heart. Isoform 3 is highly expressed in adult retina, brain, kidney, liver, skeletal muscle, spleen and heart. Detected in embryonic retina, brain, spinal cord, peripheral sensory ganglia and thymus.

Its subcellular location is the cytoplasm. The protein localises to the cytoskeleton. May act as scaffold protein. May play a role in the development of the retina. Has been suggested to play a role in axon guidance. In Mus musculus (Mouse), this protein is Actin-binding LIM protein 1 (Ablim1).